Consider the following 122-residue polypeptide: Large ribosomal subunit protein uL18 (122 aa).

The protein belongs to the universal ribosomal protein uL18 family. As to quaternary structure, part of the 50S ribosomal subunit; part of the 5S rRNA/L5/L18/L25 subcomplex. Contacts the 5S and 23S rRNAs.

Functionally, this is one of the proteins that bind and probably mediate the attachment of the 5S RNA into the large ribosomal subunit, where it forms part of the central protuberance. The polypeptide is Large ribosomal subunit protein uL18 (Geobacter sp. (strain M21)).